The primary structure comprises 179 residues: UPF0302 protein BLi02393/BL02764 (179 aa).

It belongs to the UPF0302 family.

The polypeptide is UPF0302 protein BLi02393/BL02764 (Bacillus licheniformis (strain ATCC 14580 / DSM 13 / JCM 2505 / CCUG 7422 / NBRC 12200 / NCIMB 9375 / NCTC 10341 / NRRL NRS-1264 / Gibson 46)).